A 128-amino-acid polypeptide reads, in one-letter code: L-ectoine synthase (128 aa).

This sequence belongs to the ectoine synthase family.

The enzyme catalyses (2S)-4-acetamido-2-aminobutanoate = L-ectoine + H2O. Its pathway is amine and polyamine biosynthesis; ectoine biosynthesis; L-ectoine from L-aspartate 4-semialdehyde: step 3/3. Its function is as follows. Catalyzes the circularization of gamma-N-acetyl-alpha,gamma-diaminobutyric acid (ADABA) to ectoine (1,4,5,6-tetrahydro-2-methyl-4-pyrimidine carboxylic acid), which is an excellent osmoprotectant. This chain is L-ectoine synthase, found in Vibrio campbellii (strain ATCC BAA-1116).